The primary structure comprises 67 residues: Surface composition regulator (67 aa).

Belongs to the GlgS family.

Major determinant of cell surface composition. Negatively regulates motility, adhesion and synthesis of biofilm exopolysaccharides. This is Surface composition regulator from Salmonella paratyphi A (strain ATCC 9150 / SARB42).